The primary structure comprises 268 residues: Undecaprenyl-diphosphatase (268 aa).

The next 7 membrane-spanning stretches (helical) occupy residues 5–25 (SIIS…IPVS), 43–63 (GNTF…LVYF), 84–104 (LSVL…HGFI), 109–129 (FETP…LYVI), 184–204 (AAEF…ALDL), 213–233 (IDDI…GIFV), and 248–268 (PFAI…WLLG).

It belongs to the UppP family.

It localises to the cell inner membrane. The enzyme catalyses di-trans,octa-cis-undecaprenyl diphosphate + H2O = di-trans,octa-cis-undecaprenyl phosphate + phosphate + H(+). Its function is as follows. Catalyzes the dephosphorylation of undecaprenyl diphosphate (UPP). Confers resistance to bacitracin. In Sinorhizobium medicae (strain WSM419) (Ensifer medicae), this protein is Undecaprenyl-diphosphatase.